We begin with the raw amino-acid sequence, 380 residues long: 3-dehydroquinate synthase (380 aa).

Residues 68–73, 102–106, 126–127, Lys-139, and Lys-148 each bind NAD(+); these read PGEPNK, GTVLD, and TT. Glu-181, His-243, and His-259 together coordinate Zn(2+).

Belongs to the sugar phosphate cyclases superfamily. Dehydroquinate synthase family. Requires NAD(+) as cofactor. The cofactor is Co(2+). Zn(2+) serves as cofactor.

The protein localises to the cytoplasm. The catalysed reaction is 7-phospho-2-dehydro-3-deoxy-D-arabino-heptonate = 3-dehydroquinate + phosphate. Its pathway is metabolic intermediate biosynthesis; chorismate biosynthesis; chorismate from D-erythrose 4-phosphate and phosphoenolpyruvate: step 2/7. Catalyzes the conversion of 3-deoxy-D-arabino-heptulosonate 7-phosphate (DAHP) to dehydroquinate (DHQ). The chain is 3-dehydroquinate synthase (aroB) from Chlamydia pneumoniae (Chlamydophila pneumoniae).